The following is a 557-amino-acid chain: UvrABC system protein C (557 aa).

The 76-residue stretch at 14 to 89 (EEPGVYIFKN…IKKYRPKYNV (76 aa)) folds into the GIY-YIG domain. The region spanning 194–229 (EEVFDYLKEKMETHSKMLDFENAAKYRDLLLNLSNV) is the UVR domain.

The protein belongs to the UvrC family. In terms of assembly, interacts with UvrB in an incision complex.

It localises to the cytoplasm. In terms of biological role, the UvrABC repair system catalyzes the recognition and processing of DNA lesions. UvrC both incises the 5' and 3' sides of the lesion. The N-terminal half is responsible for the 3' incision and the C-terminal half is responsible for the 5' incision. In Thermotoga maritima (strain ATCC 43589 / DSM 3109 / JCM 10099 / NBRC 100826 / MSB8), this protein is UvrABC system protein C.